We begin with the raw amino-acid sequence, 1145 residues long: DNA polymerase subunit gamma-1, mitochondrial (1145 aa).

Residues 1-9 (MQFHLIRKY) constitute a mitochondrion transit peptide.

Belongs to the DNA polymerase type-A family. As to quaternary structure, component of the DNA polymerase gamma complex consisting of two subunits: the catalytic subunit DNApol-gamma/DNApolG1 and the accessory subunit PolG2/DNApol-gamma35. Requires Mg(2+) as cofactor.

It localises to the mitochondrion. It carries out the reaction DNA(n) + a 2'-deoxyribonucleoside 5'-triphosphate = DNA(n+1) + diphosphate. With respect to regulation, stimulated by KCl, and inhibited by the small molecules o 2',3'-dideoxythymidine 5'-triphosphate (d2TTP) and N-ethylmaleimide (NEM). Functionally, as the catalytic component of the DNA polymerase gamma complex is involved in the replication of mitochondrial DNA (mtDNA). Has both 5'-3' DNA polymerase and a highly mispair-specific 3'-5' exonuclease activity. At the end of mtDNA replication DNA ends are ligated to produce a closed circular mtDNA molecule, its exonuclease activity is required for formation of these ligatable ends by preventing DNA synthesis from continuing past the 5'-end of downstream DNA into duplex DNA regions. Does not possess DNA primase activity, does not catalyze strand displacement synthesis and does not contain a 5'-3' exonuclease activity to catalyze nick translation. Important for promoting the elimination of paternal mitochondrial DNA during spermatogenesis, however its exact role in this function has not yet been identified and appears to be independent of its 3'-5'-exonuclease activity and only partially dependent on its DNA polymerase activity. The sequence is that of DNA polymerase subunit gamma-1, mitochondrial from Drosophila melanogaster (Fruit fly).